Consider the following 593-residue polypeptide: Glucose-6-phosphate 1-dehydrogenase, chloroplastic (593 aa).

Residues 116-123 and Arg-150 contribute to the NADP(+) site; that span reads GASGDLAK. Cys-168 and Cys-176 are joined by a disulfide. Lys-253 contacts NADP(+). D-glucose 6-phosphate-binding positions include Lys-253, 283-287, Glu-321, and Asp-340; that span reads HYLGK. His-345 serves as the catalytic Proton acceptor. Lys-438 contacts NADP(+). D-glucose 6-phosphate is bound by residues Lys-441 and Arg-446. The NADP(+) site is built by Arg-451 and Arg-480. Gln-482 is a binding site for D-glucose 6-phosphate. Residues 488–490 and Arg-573 contribute to the NADP(+) site; that span reads YLK.

This sequence belongs to the glucose-6-phosphate dehydrogenase family. Homodimer.

It is found in the plastid. The protein localises to the chloroplast. The enzyme catalyses D-glucose 6-phosphate + NADP(+) = 6-phospho-D-glucono-1,5-lactone + NADPH + H(+). It functions in the pathway carbohydrate degradation; pentose phosphate pathway; D-ribulose 5-phosphate from D-glucose 6-phosphate (oxidative stage): step 1/3. With respect to regulation, regulated by metabolites. Post-translationally inactivated by cysteine-mediated redox modification via the ferredoxin-thioredoxin system in the light and this avoids futile cycles with photosynthetic CO2 fixation. Functionally, catalyzes the rate-limiting step of the oxidative pentose-phosphate pathway, which represents a route for the dissimilation of carbohydrates besides glycolysis. The main function of this enzyme is to provide reducing power (NADPH) and pentose phosphates for fatty acid and nucleic acid synthesis which are involved in membrane synthesis and cell division. This chain is Glucose-6-phosphate 1-dehydrogenase, chloroplastic, found in Nicotiana tabacum (Common tobacco).